A 607-amino-acid chain; its full sequence is Elongation factor 4 (607 aa).

Positions 11-193 (SKIRNFSIIA…QIVEKVPAPT (183 aa)) constitute a tr-type G domain. Residues 23–28 (DHGKST) and 140–143 (NKID) each bind GTP.

The protein belongs to the TRAFAC class translation factor GTPase superfamily. Classic translation factor GTPase family. LepA subfamily.

The protein resides in the cell membrane. The catalysed reaction is GTP + H2O = GDP + phosphate + H(+). Required for accurate and efficient protein synthesis under certain stress conditions. May act as a fidelity factor of the translation reaction, by catalyzing a one-codon backward translocation of tRNAs on improperly translocated ribosomes. Back-translocation proceeds from a post-translocation (POST) complex to a pre-translocation (PRE) complex, thus giving elongation factor G a second chance to translocate the tRNAs correctly. Binds to ribosomes in a GTP-dependent manner. The chain is Elongation factor 4 from Bacillus cereus (strain Q1).